A 370-amino-acid polypeptide reads, in one-letter code: Neutral protease 2 homolog AFUB_070680 (370 aa).

An N-terminal signal peptide occupies residues 1 to 19 (MKVTILASAILALINGALA). Positions 20-172 (LPANTPTLDV…PQAIKLLDRR (153 aa)) are excised as a propeptide. Disulfide bonds link Cys-178–Cys-250 and Cys-257–Cys-275. Position 300 (His-300) interacts with Zn(2+). The active site involves Glu-301. Residues His-304 and Asp-315 each contribute to the Zn(2+) site.

This sequence belongs to the peptidase M35 family. Zn(2+) is required as a cofactor.

The protein localises to the secreted. It catalyses the reaction Preferential cleavage of bonds with hydrophobic residues in P1'. Also 3-Asn-|-Gln-4 and 8-Gly-|-Ser-9 bonds in insulin B chain.. Its function is as follows. Secreted metalloproteinase that allows assimilation of proteinaceous substrates. Shows high activities on basic nuclear substrates such as histone and protamine. May be involved in virulence. In Aspergillus fumigatus (strain CBS 144.89 / FGSC A1163 / CEA10) (Neosartorya fumigata), this protein is Neutral protease 2 homolog AFUB_070680.